We begin with the raw amino-acid sequence, 263 residues long: Proliferating cellular nuclear antigen 1 (263 aa).

Residues 61 to 80 mediate DNA binding; it reads RCDRNLSMGMNLGNMSKMLK.

It belongs to the PCNA family. As to quaternary structure, homo- and heterotrimer. Interacts with POLH, ATXR5 and ATXR6.

It is found in the nucleus. This protein is an auxiliary protein of DNA polymerase delta and is involved in the control of eukaryotic DNA replication by increasing the polymerase's processibility during elongation of the leading strand. This is Proliferating cellular nuclear antigen 1 (PCNA) from Arabidopsis thaliana (Mouse-ear cress).